Here is a 386-residue protein sequence, read N- to C-terminus: Zinc transporter 7-A (386 aa).

Topologically, residues 1 to 37 are cytoplasmic; it reads MLPLSIKDDEYKPPKFNLARKVSGWIRSIFSDSTSRN. The chain crosses the membrane as a helical span at residues 38 to 58; that stretch reads LFCFLCLNLSFAFVELFYGIW. The Lumenal segment spans residues 59–67; sequence SNSLGLISD. The chain crosses the membrane as a helical span at residues 68-88; it reads SFHMFFDCTALLAGLAASVIS. Over 89–102 the chain is Cytoplasmic; the sequence is RWKTNEAFSYGYVR. A helical transmembrane segment spans residues 103–123; sequence AEVLAGFVNGLFLIFTAFFIF. The Lumenal portion of the chain corresponds to 124-140; the sequence is SEGVERALDTPEVHHER. The chain crosses the membrane as a helical span at residues 141 to 161; that stretch reads LLPVSIMGLLVNIIGIFVFQH. Positions 161–222 are his-rich loop; it reads HGGGHGHSHE…GHSHDHSPKH (62 aa). Residues 162-246 lie on the Cytoplasmic side of the membrane; that stretch reads GGGHGHSHES…KGSSKQILEG (85 aa). The segment at 167-239 is disordered; that stretch reads HSHESGHGHS…DEPPEEHKGS (73 aa). Basic and acidic residues predominate over residues 228–238; the sequence is CHDEPPEEHKG. The helical transmembrane segment at 247 to 267 threads the bilayer; the sequence is VFLHIVADTLGSVGVIFSTIL. At 268–272 the chain is on the lumenal side; the sequence is MQRYG. A helical transmembrane segment spans residues 273–293; sequence LMIADPICSMLIALLIFVSVI. At 294 to 386 the chain is on the cytoplasmic side; sequence PLLKQSIGIL…LYVQIDFAAI (93 aa).

Belongs to the cation diffusion facilitator (CDF) transporter (TC 2.A.4) family. SLC30A subfamily. As to quaternary structure, homooligomer.

The protein resides in the golgi apparatus membrane. The protein localises to the cytoplasmic vesicle. It is found in the golgi apparatus. Its subcellular location is the trans-Golgi network. It localises to the sarcoplasmic reticulum. The protein resides in the mitochondrion. It catalyses the reaction Zn(2+)(in) = Zn(2+)(out). Zinc ion transporter mediating zinc entry from the cytosol into the lumen of organelles along the secretory pathway. By contributing to zinc ion homeostasis within the early secretory pathway, regulates the activation and folding of enzymes like alkaline phosphatases. The polypeptide is Zinc transporter 7-A (slc30a7-a) (Xenopus laevis (African clawed frog)).